A 458-amino-acid chain; its full sequence is Argininosuccinate lyase (458 aa).

The protein belongs to the lyase 1 family. Argininosuccinate lyase subfamily.

It localises to the cytoplasm. The enzyme catalyses 2-(N(omega)-L-arginino)succinate = fumarate + L-arginine. The protein operates within amino-acid biosynthesis; L-arginine biosynthesis; L-arginine from L-ornithine and carbamoyl phosphate: step 3/3. In Neisseria meningitidis serogroup A / serotype 4A (strain DSM 15465 / Z2491), this protein is Argininosuccinate lyase.